The primary structure comprises 513 residues: MNPSLNAFRPGRLLVAASLTASLLSLSVQAATLTRDNGAPVGDNQNSQTAGPNGSVLLQDVQLLQKLQRFDRERIPERVVHARGTGAHGEFVASADISDLSMAKVFRKGEKTPVFVRFSAVVHGNHSPETLRDPRGFATKFYTADGNWDLVGNNFPTFFIRDAIKFPDMVHAFKPDPRSNLDDDSRRFDFFSHVPEATRTLTLLYSNEGTPASYREMDGNSVHAYKLVNARGEVHYVKFHWKSLQGQKNLDPKQVAEVQGRDYSHMTNDLVSAIRKGDFPKWDLYIQVLKPEDLAKFDFDPLDATKIWPGIPERKIGQMVLNRNVDNFFQETEQVAMAPSNLVPGIEPSEDRLLQGRLFAYADTQMYRVGANGLGLPVNRPRSEVNTVNQDGALNAGHSTSGVNYQPSRLDPREEQASARYVRTPLSGTTQQAKIQREQNFKQTGELFRSYGKKDQADLIASLGGALAITDDESKYIMLSYFYKADSDYGTGLAKVAGADLQRVRQLAAKLQD.

The signal sequence occupies residues 1 to 30; sequence MNPSLNAFRPGRLLVAASLTASLLSLSVQA. Catalysis depends on residues histidine 81 and asparagine 153. Residue tyrosine 361 coordinates heme. Polar residues predominate over residues 391–407; sequence DGALNAGHSTSGVNYQP. The segment at 391–413 is disordered; that stretch reads DGALNAGHSTSGVNYQPSRLDPR.

Belongs to the catalase family. Heme serves as cofactor.

It localises to the periplasm. It catalyses the reaction 2 H2O2 = O2 + 2 H2O. In terms of biological role, decomposes hydrogen peroxide into water and oxygen; serves to protect cells from the toxic effects of hydrogen peroxide. This Pseudomonas aeruginosa (strain ATCC 15692 / DSM 22644 / CIP 104116 / JCM 14847 / LMG 12228 / 1C / PRS 101 / PAO1) protein is Catalase (katB).